The following is a 315-amino-acid chain: Ribosomal protein L11 methyltransferase (315 aa).

Positions 164, 185, 207, and 249 each coordinate S-adenosyl-L-methionine.

Belongs to the methyltransferase superfamily. PrmA family.

The protein resides in the cytoplasm. The catalysed reaction is L-lysyl-[protein] + 3 S-adenosyl-L-methionine = N(6),N(6),N(6)-trimethyl-L-lysyl-[protein] + 3 S-adenosyl-L-homocysteine + 3 H(+). Its function is as follows. Methylates ribosomal protein L11. The chain is Ribosomal protein L11 methyltransferase from Lactobacillus gasseri (strain ATCC 33323 / DSM 20243 / BCRC 14619 / CIP 102991 / JCM 1131 / KCTC 3163 / NCIMB 11718 / NCTC 13722 / AM63).